Here is a 1502-residue protein sequence, read N- to C-terminus: DNA-directed RNA polymerase subunit beta' (1502 aa).

Positions 60, 62, 75, and 78 each coordinate Zn(2+). The disordered stretch occupies residues 265–293 (RKQRDLEDAEQLTGAERERKEYEASQERE). Basic and acidic residues predominate over residues 279–293 (AERERKEYEASQERE). Mg(2+) is bound by residues aspartate 626, aspartate 628, and aspartate 630. Residues cysteine 1002, cysteine 1075, cysteine 1082, and cysteine 1085 each contribute to the Zn(2+) site. Residues 1472–1502 (SDDNGDEVGKNGEFADETPFTGDSDDRDNEI) form a disordered region.

Belongs to the RNA polymerase beta' chain family. In terms of assembly, the RNAP catalytic core consists of 2 alpha, 1 beta, 1 beta' and 1 omega subunit. When a sigma factor is associated with the core the holoenzyme is formed, which can initiate transcription. Mg(2+) serves as cofactor. The cofactor is Zn(2+).

The catalysed reaction is RNA(n) + a ribonucleoside 5'-triphosphate = RNA(n+1) + diphosphate. In terms of biological role, DNA-dependent RNA polymerase catalyzes the transcription of DNA into RNA using the four ribonucleoside triphosphates as substrates. The chain is DNA-directed RNA polymerase subunit beta' from Roseiflexus castenholzii (strain DSM 13941 / HLO8).